Reading from the N-terminus, the 789-residue chain is Fibrinogen alpha chain (789 aa).

The N-terminal stretch at 1–19 is a signal peptide; it reads MLSLRVTCLILSVASTVWT. A Phosphoserine modification is found at serine 46. Residues 69 to 554 are a coiled coil; the sequence is CRMKGLIDEA…GRARARPTRD (486 aa). 2 stretches are compositionally biased toward basic and acidic residues: residues 263-287 and 384-396; these read ERPG…RGDF and KGDK…KEKV. The disordered stretch occupies residues 263-420; the sequence is ERPGKDGGSR…TITKTVTGPD (158 aa). Residues 397–416 are compositionally biased toward polar residues; the sequence is TSSGTSTTHRSCSKTITKTV. A disulfide bridge links cysteine 408 with cysteine 438. Serine 447 is subject to Phosphoserine. Proline 504 carries the 4-hydroxyproline; by P4HA1 modification. Positions 526–541 are enriched in basic and acidic residues; that stretch reads ADEAGSEAHREGETRN. The interval 526–555 is disordered; sequence ADEAGSEAHREGETRNTKRGRARARPTRDC. A Fibrinogen C-terminal domain is found at 546–787; it reads RARARPTRDC…AVRMKIRPLV (242 aa). The N-linked (GlcNAc...) asparagine glycan is linked to asparagine 609. 4 residues coordinate Ca(2+): aspartate 714, aspartate 716, tryptophan 718, and glutamate 720. Residues cysteine 722 and cysteine 735 are joined by a disulfide bond.

Heterohexamer; disulfide linked. Contains 2 sets of 3 non-identical chains (alpha, beta and gamma). The 2 heterotrimers are in head to head conformation with the N-termini in a small central domain. In terms of processing, conversion of fibrinogen to fibrin is triggered by thrombin, which cleaves fibrinopeptides A and B from alpha and beta chains, and thus exposes the N-terminal polymerization sites responsible for the formation of the soft clot. The soft clot is converted into the hard clot by factor XIIIA which catalyzes the epsilon-(gamma-glutamyl)lysine cross-linking between gamma chains (stronger) and between alpha chains (weaker) of different monomers. Forms F13A-mediated cross-links between a glutamine and the epsilon-amino group of a lysine residue, forming fibronectin-fibrinogen heteropolymers. Post-translationally, phosphorylated by FAM20C in the extracellular medium. In terms of tissue distribution, expressed in liver.

Its subcellular location is the secreted. Functionally, cleaved by the protease thrombin to yield monomers which, together with fibrinogen beta (FGB) and fibrinogen gamma (FGG), polymerize to form an insoluble fibrin matrix. Fibrin has a major function in hemostasis as one of the primary components of blood clots. In addition, functions during the early stages of wound repair to stabilize the lesion and guide cell migration during re-epithelialization. Was originally thought to be essential for platelet aggregation, based on in vitro studies using anticoagulated blood. However, subsequent studies have shown that it is not absolutely required for thrombus formation in vivo. Enhances expression of SELP in activated platelets via an ITGB3-dependent pathway. Maternal fibrinogen is essential for successful pregnancy. Fibrin deposition is also associated with infection, where it protects against IFNG-mediated hemorrhage. May also facilitate the immune response via both innate and T-cell mediated pathways. The protein is Fibrinogen alpha chain of Mus musculus (Mouse).